The primary structure comprises 390 residues: Formate-dependent phosphoribosylglycinamide formyltransferase (390 aa).

N(1)-(5-phospho-beta-D-ribosyl)glycinamide is bound by residues 18 to 19 and glutamate 78; that span reads EL. ATP contacts are provided by residues arginine 110, lysine 151, 156–161, 191–194, and glutamate 199; these read SSGKGQ and EEFL. The ATP-grasp domain occupies 115–305; it reads DLASKELNIK…EFELHLRAFL (191 aa). Mg(2+)-binding residues include glutamate 264 and glutamate 276. Residues aspartate 283, lysine 353, and 360–361 each bind N(1)-(5-phospho-beta-D-ribosyl)glycinamide; that span reads RR.

This sequence belongs to the PurK/PurT family. As to quaternary structure, homodimer.

It catalyses the reaction N(1)-(5-phospho-beta-D-ribosyl)glycinamide + formate + ATP = N(2)-formyl-N(1)-(5-phospho-beta-D-ribosyl)glycinamide + ADP + phosphate + H(+). Its pathway is purine metabolism; IMP biosynthesis via de novo pathway; N(2)-formyl-N(1)-(5-phospho-D-ribosyl)glycinamide from N(1)-(5-phospho-D-ribosyl)glycinamide (formate route): step 1/1. In terms of biological role, involved in the de novo purine biosynthesis. Catalyzes the transfer of formate to 5-phospho-ribosyl-glycinamide (GAR), producing 5-phospho-ribosyl-N-formylglycinamide (FGAR). Formate is provided by PurU via hydrolysis of 10-formyl-tetrahydrofolate. In Prochlorococcus marinus subsp. pastoris (strain CCMP1986 / NIES-2087 / MED4), this protein is Formate-dependent phosphoribosylglycinamide formyltransferase.